Reading from the N-terminus, the 425-residue chain is Zinc finger protein 789 (425 aa).

The 72-residue stretch at 11–82 (LSFEDVAMYF…DLPRTGNRKA (72 aa)) folds into the KRAB domain. 8 C2H2-type zinc fingers span residues 201-223 (YECSECGKVIRRKAWFDQHQRIH), 229-251 (FECKVCGQAFRQRSALTVHKQCH), 257-279 (YRCHDCGKCFRQLAYLVEHKRIH), 285-307 (YKCSKCEKTFSQNSTLIRHQVIH), 313-335 (HKCLECGKAFGRHSTLLCHQQIH), 341-363 (HKCSECGQSFGRNVDLIQHQRIH), 369-391 (FQCGECGKTFSFKRNLFRHQVIH), and 397-419 (YQCVICGKSFKWHTSFIKHQGTH).

This sequence belongs to the krueppel C2H2-type zinc-finger protein family.

It localises to the nucleus. Functionally, may be involved in transcriptional regulation. This is Zinc finger protein 789 (ZNF789) from Homo sapiens (Human).